Reading from the N-terminus, the 389-residue chain is tRNA N(3)-cytidine methyltransferase METTL2 (389 aa).

A disordered region spans residues 1–20 (MAASFPEGVPETEDGKRPQF). S-adenosyl-L-methionine is bound by residues W78, Y82, G181, D206, D232, L233, and I253.

Belongs to the methyltransferase superfamily. METL family. Monomer. Interacts with DALRD3.

It localises to the cytoplasm. It catalyses the reaction cytidine(32) in tRNA(Thr) + S-adenosyl-L-methionine = N(3)-methylcytidine(32) in tRNA(Thr) + S-adenosyl-L-homocysteine + H(+). The enzyme catalyses cytidine(32) in tRNA(Arg)(CCU) + S-adenosyl-L-methionine = N(3)-methylcytidine(32) in tRNA(Arg)(CCU) + S-adenosyl-L-homocysteine + H(+). Its function is as follows. S-adenosyl-L-methionine-dependent methyltransferase that mediates N(3)-methylcytidine modification of residue 32 of the tRNA anticodon loop of tRNA(Thr)(UGU) and tRNA(Arg)(CCU). N(3)-methylcytidine methylation by METTL2 requires the N6-threonylcarbamoylation of tRNA (t6A37) by the EKC/KEOPS complex as prerequisite. The chain is tRNA N(3)-cytidine methyltransferase METTL2 from Mus musculus (Mouse).